The sequence spans 208 residues: Octanoyltransferase (208 aa).

The region spanning 29–208 (KTQDELVWLL…KEFNKVFCNC (180 aa)) is the BPL/LPL catalytic domain. Substrate is bound by residues 68 to 75 (RGGKYTYH), 140 to 142 (AFG), and 153 to 155 (GVS). The Acyl-thioester intermediate role is filled by C171.

Belongs to the LipB family.

The protein localises to the cytoplasm. The enzyme catalyses octanoyl-[ACP] + L-lysyl-[protein] = N(6)-octanoyl-L-lysyl-[protein] + holo-[ACP] + H(+). Its pathway is protein modification; protein lipoylation via endogenous pathway; protein N(6)-(lipoyl)lysine from octanoyl-[acyl-carrier-protein]: step 1/2. Catalyzes the transfer of endogenously produced octanoic acid from octanoyl-acyl-carrier-protein onto the lipoyl domains of lipoate-dependent enzymes. Lipoyl-ACP can also act as a substrate although octanoyl-ACP is likely to be the physiological substrate. This is Octanoyltransferase from Ehrlichia ruminantium (strain Gardel).